The primary structure comprises 279 residues: Probable ribosomal RNA small subunit methyltransferase A (279 aa).

S-adenosyl-L-methionine contacts are provided by N23, L25, G50, E71, D95, and N110.

It belongs to the class I-like SAM-binding methyltransferase superfamily. rRNA adenine N(6)-methyltransferase family. RsmA subfamily.

The protein resides in the cytoplasm. In terms of biological role, specifically dimethylates two adjacent adenosines in the loop of a conserved hairpin near the 3'-end of 16S rRNA in the 30S particle. May play a critical role in biogenesis of 30S subunits. The protein is Probable ribosomal RNA small subunit methyltransferase A of Thermococcus kodakarensis (strain ATCC BAA-918 / JCM 12380 / KOD1) (Pyrococcus kodakaraensis (strain KOD1)).